A 476-amino-acid chain; its full sequence is ATP synthase subunit beta (476 aa).

154 to 161 (GGAGVGKT) contacts ATP.

The protein belongs to the ATPase alpha/beta chains family. In terms of assembly, F-type ATPases have 2 components, CF(1) - the catalytic core - and CF(0) - the membrane proton channel. CF(1) has five subunits: alpha(3), beta(3), gamma(1), delta(1), epsilon(1). CF(0) has three main subunits: a(1), b(2) and c(9-12). The alpha and beta chains form an alternating ring which encloses part of the gamma chain. CF(1) is attached to CF(0) by a central stalk formed by the gamma and epsilon chains, while a peripheral stalk is formed by the delta and b chains.

The protein resides in the cell inner membrane. It carries out the reaction ATP + H2O + 4 H(+)(in) = ADP + phosphate + 5 H(+)(out). Produces ATP from ADP in the presence of a proton gradient across the membrane. The catalytic sites are hosted primarily by the beta subunits. In Afipia carboxidovorans (strain ATCC 49405 / DSM 1227 / KCTC 32145 / OM5) (Oligotropha carboxidovorans), this protein is ATP synthase subunit beta.